A 208-amino-acid polypeptide reads, in one-letter code: Small ribosomal subunit protein uS4 (208 aa).

The 63-residue stretch at 98–160 folds into the S4 RNA-binding domain; the sequence is CRLDNVVYRM…AKKQSRIQLA (63 aa).

This sequence belongs to the universal ribosomal protein uS4 family. Part of the 30S ribosomal subunit. Contacts protein S5. The interaction surface between S4 and S5 is involved in control of translational fidelity.

One of the primary rRNA binding proteins, it binds directly to 16S rRNA where it nucleates assembly of the body of the 30S subunit. Functionally, with S5 and S12 plays an important role in translational accuracy. The protein is Small ribosomal subunit protein uS4 of Vesicomyosocius okutanii subsp. Calyptogena okutanii (strain HA).